Reading from the N-terminus, the 152-residue chain is Large ribosomal subunit protein uL13 (152 aa).

Belongs to the universal ribosomal protein uL13 family. Part of the 50S ribosomal subunit.

Functionally, this protein is one of the early assembly proteins of the 50S ribosomal subunit, although it is not seen to bind rRNA by itself. It is important during the early stages of 50S assembly. The chain is Large ribosomal subunit protein uL13 from Wolbachia sp. subsp. Drosophila simulans (strain wRi).